The chain runs to 188 residues: Phosphoribosylglycinamide formyltransferase (188 aa).

12–14 contributes to the N(1)-(5-phospho-beta-D-ribosyl)glycinamide binding site; it reads GSN. (6R)-10-formyltetrahydrofolate is bound by residues Lys-66, 91–94, and Asn-108; that span reads MRLI. His-110 acts as the Proton donor in catalysis.

The protein belongs to the GART family.

The enzyme catalyses N(1)-(5-phospho-beta-D-ribosyl)glycinamide + (6R)-10-formyltetrahydrofolate = N(2)-formyl-N(1)-(5-phospho-beta-D-ribosyl)glycinamide + (6S)-5,6,7,8-tetrahydrofolate + H(+). Its pathway is purine metabolism; IMP biosynthesis via de novo pathway; N(2)-formyl-N(1)-(5-phospho-D-ribosyl)glycinamide from N(1)-(5-phospho-D-ribosyl)glycinamide (10-formyl THF route): step 1/1. Its function is as follows. Catalyzes the transfer of a formyl group from 10-formyltetrahydrofolate to 5-phospho-ribosyl-glycinamide (GAR), producing 5-phospho-ribosyl-N-formylglycinamide (FGAR) and tetrahydrofolate. This chain is Phosphoribosylglycinamide formyltransferase, found in Staphylococcus aureus (strain MRSA252).